A 229-amino-acid chain; its full sequence is Uracil-DNA glycosylase (229 aa).

Aspartate 64 serves as the catalytic Proton acceptor.

Belongs to the uracil-DNA glycosylase (UDG) superfamily. UNG family.

It is found in the cytoplasm. The enzyme catalyses Hydrolyzes single-stranded DNA or mismatched double-stranded DNA and polynucleotides, releasing free uracil.. Excises uracil residues from the DNA which can arise as a result of misincorporation of dUMP residues by DNA polymerase or due to deamination of cytosine. In Escherichia coli O7:K1 (strain IAI39 / ExPEC), this protein is Uracil-DNA glycosylase.